Reading from the N-terminus, the 242-residue chain is DNA repair protein RecO (242 aa).

It belongs to the RecO family.

In terms of biological role, involved in DNA repair and RecF pathway recombination. This chain is DNA repair protein RecO, found in Nitrosospira multiformis (strain ATCC 25196 / NCIMB 11849 / C 71).